The following is a 206-amino-acid chain: Oligoribonuclease (206 aa).

The 164-residue stretch at 20–183 (LVWLDMEMTG…ADIHESIDEL (164 aa)) folds into the Exonuclease domain. Tyrosine 141 is a catalytic residue.

This sequence belongs to the oligoribonuclease family.

It localises to the cytoplasm. 3'-to-5' exoribonuclease specific for small oligoribonucleotides. This chain is Oligoribonuclease, found in Burkholderia lata (strain ATCC 17760 / DSM 23089 / LMG 22485 / NCIMB 9086 / R18194 / 383).